The following is a 65-amino-acid chain: MPGVKVKETESFELALKKFKKQCEKAGILSEVRKREHYEKPSIKRKKKAIAARKRAMKKQRKMMD.

This sequence belongs to the bacterial ribosomal protein bS21 family.

The protein is Small ribosomal subunit protein bS21B of Geobacter sulfurreducens (strain ATCC 51573 / DSM 12127 / PCA).